The chain runs to 250 residues: MRTLVLLSSVAILSTLAVKCKYDGKDLENNEVITVQNAFRIKCLTEDNGSWKTEIIGCVTPDGTEINAGEKKEVGDKVHECVKSESGQVSLKESKGRTAACPGGQKHGEQWQEKSFKFRCGDGGVVKFEACVGQDGSVIPAGETGKIGGFDVKCEQHANGTITMQAANDPKSYDCTAKDGSSKKNGEEYVEGNFVRKCGDYGQGKIIGCHAENVGNTIGINQNVTSGDIVYSCTKDGSNYSFKTYSLKAN.

A signal peptide spans Met-1–Ala-17. Asn-48, Asn-159, Asn-223, and Asn-239 each carry an N-linked (GlcNAc...) asparagine glycan.

The protein localises to the secreted. This is an uncharacterized protein from Caenorhabditis elegans.